Consider the following 322-residue polypeptide: HPr kinase/phosphorylase (322 aa).

Active-site residues include H146 and K167. 161 to 168 (GDSGLGKS) lines the ATP pocket. S168 lines the Mg(2+) pocket. D185 acts as the Proton acceptor; for phosphorylation activity. Proton donor; for dephosphorylation activity in catalysis. Residues 209–218 (LEVRGLGLLD) form an important for the catalytic mechanism of both phosphorylation and dephosphorylation region. E210 provides a ligand contact to Mg(2+). The active site involves R250. The tract at residues 271 to 276 (QVAAGR) is important for the catalytic mechanism of dephosphorylation.

Belongs to the HPrK/P family. As to quaternary structure, homohexamer. Requires Mg(2+) as cofactor.

It carries out the reaction [HPr protein]-L-serine + ATP = [HPr protein]-O-phospho-L-serine + ADP + H(+). The catalysed reaction is [HPr protein]-O-phospho-L-serine + phosphate + H(+) = [HPr protein]-L-serine + diphosphate. Its function is as follows. Catalyzes the ATP- as well as the pyrophosphate-dependent phosphorylation of a specific serine residue in HPr, a phosphocarrier protein of the phosphoenolpyruvate-dependent sugar phosphotransferase system (PTS). HprK/P also catalyzes the pyrophosphate-producing, inorganic phosphate-dependent dephosphorylation (phosphorolysis) of seryl-phosphorylated HPr (P-Ser-HPr). The chain is HPr kinase/phosphorylase from Burkholderia lata (strain ATCC 17760 / DSM 23089 / LMG 22485 / NCIMB 9086 / R18194 / 383).